The sequence spans 282 residues: Bifunctional protein FolD (282 aa).

Residues Gly166–Ser168 and Ile232 each bind NADP(+).

The protein belongs to the tetrahydrofolate dehydrogenase/cyclohydrolase family. As to quaternary structure, homodimer.

It catalyses the reaction (6R)-5,10-methylene-5,6,7,8-tetrahydrofolate + NADP(+) = (6R)-5,10-methenyltetrahydrofolate + NADPH. The enzyme catalyses (6R)-5,10-methenyltetrahydrofolate + H2O = (6R)-10-formyltetrahydrofolate + H(+). It functions in the pathway one-carbon metabolism; tetrahydrofolate interconversion. Catalyzes the oxidation of 5,10-methylenetetrahydrofolate to 5,10-methenyltetrahydrofolate and then the hydrolysis of 5,10-methenyltetrahydrofolate to 10-formyltetrahydrofolate. The sequence is that of Bifunctional protein FolD from Haemophilus influenzae (strain PittEE).